Here is a 65-residue protein sequence, read N- to C-terminus: Alpha-toxin Lqq4 (65 aa).

The 63-residue stretch at 3–65 folds into the LCN-type CS-alpha/beta domain; that stretch reads RDAYIADDKN…VPIRIPGKCR (63 aa). Residues 9 to 13 form a specificity module, loop 1 region; the sequence is DDKNC. Cystine bridges form between Cys13–Cys64, Cys17–Cys37, Cys23–Cys47, and Cys27–Cys49. 2 specificity module, loop regions span residues 40–44 and 57–65; these read LGKYG and PIRIPGKCR. Arg65 is modified (arginine amide).

It belongs to the long (4 C-C) scorpion toxin superfamily. Sodium channel inhibitor family. Alpha subfamily. The recombinant toxin which is used for activity tests is not amidated. However, C-terminal amidation does not appear to play an important role in activity, since the non-amidated recombinant toxin and the native toxin (which is amidated) show similar activities on all sodium channels tested. Expressed by the venom gland.

Its subcellular location is the secreted. Its function is as follows. Alpha toxins bind voltage-independently at site-3 of sodium channels (Nav) and inhibit the inactivation of the activated channels, thereby blocking neuronal transmission. Both native and recombinant (non-amidated) toxins inhibit inactivation of Nav1.2/SCN2A (EC(50)=31.2-36.6 nM), Nav1.6/SCN8A (EC(50)=6.9-8.9 nM), and Nav1.7/SCN9A (EC(50)=182.0-260.1 nM). The sequence is that of Alpha-toxin Lqq4 from Leiurus quinquestriatus quinquestriatus (Egyptian scorpion).